A 367-amino-acid chain; its full sequence is Methylthioribose-1-phosphate isomerase (367 aa).

Residues 54–56 (RGA), arginine 91, and glutamine 201 each bind substrate. Aspartate 242 functions as the Proton donor in the catalytic mechanism. A substrate-binding site is contributed by 252-253 (NK).

It belongs to the eIF-2B alpha/beta/delta subunits family. MtnA subfamily.

It catalyses the reaction 5-(methylsulfanyl)-alpha-D-ribose 1-phosphate = 5-(methylsulfanyl)-D-ribulose 1-phosphate. Its pathway is amino-acid biosynthesis; L-methionine biosynthesis via salvage pathway; L-methionine from S-methyl-5-thio-alpha-D-ribose 1-phosphate: step 1/6. In terms of biological role, catalyzes the interconversion of methylthioribose-1-phosphate (MTR-1-P) into methylthioribulose-1-phosphate (MTRu-1-P). The protein is Methylthioribose-1-phosphate isomerase of Acidiphilium cryptum (strain JF-5).